Reading from the N-terminus, the 715-residue chain is ATP-dependent zinc metalloprotease YME1L1 (715 aa).

Residues 1-237 (MFSLSSTVQP…TNDSLRRTRL (237 aa)) lie on the Mitochondrial matrix side of the membrane. Residues 34 to 54 (NTPVSQKQHRDTVPEHEAPSS) form a disordered region. Basic and acidic residues predominate over residues 41–52 (QHRDTVPEHEAP). Residues 238–258 (ILFVLLLFGIYGLLKNPFLSV) form a helical membrane-spanning segment. Over 259–715 (RFRTTTGLDS…VLEGKKLEVR (457 aa)) the chain is Mitochondrial intermembrane. ATP is bound by residues V283, T325, G326, K327, T328, and L329. Position 541 (H541) interacts with Zn(2+). E542 is a catalytic residue. Residues H545 and D619 each coordinate Zn(2+).

This sequence in the N-terminal section; belongs to the AAA ATPase family. The protein in the C-terminal section; belongs to the peptidase M41 family. As to quaternary structure, homohexamer; may also form heterohexamers. Exists in several complexes of 600-1100 kDa. Interacts with AFG1L. It depends on Zn(2+) as a cofactor. In terms of processing, proteolytically processed by mitochondrial processing peptidase (MPP) to generate the mature form. Degraded in an OMA1-dependent manner in response to oxidative stress. As to expression, detected in heart and skeletal muscle (at protein level).

The protein localises to the mitochondrion inner membrane. Its subcellular location is the mitochondrion. The catalysed reaction is ATP + H2O = ADP + phosphate + H(+). In terms of biological role, ATP-dependent metalloprotease that catalyzes the degradation of folded and unfolded proteins with a suitable degron sequence in the mitochondrial intermembrane region. Plays an important role in regulating mitochondrial morphology and function by cleaving OPA1 at position S2, giving rise to a form of OPA1 that promotes maintenance of normal mitochondrial structure and mitochondrial protein metabolism. Ensures cell proliferation, maintains normal cristae morphology and complex I respiration activity, promotes antiapoptotic activity and protects mitochondria from the accumulation of oxidatively damaged membrane proteins. Required to control the accumulation of nonassembled respiratory chain subunits (NDUFB6, OX4 and ND1). Involved in the mitochondrial adaptation in response to various signals, such as stress or developmental cues, by mediating degradation of mitochondrial proteins to rewire the mitochondrial proteome. Catalyzes degradation of mitochondrial proteins, such as translocases, lipid transfer proteins and metabolic enzymes in response to nutrient starvation in order to limit mitochondrial biogenesis: mechanistically, YME1L is activated by decreased phosphatidylethanolamine levels caused by LPIN1 activity in response to mTORC1 inhibition. Acts as a regulator of adult neural stem cell self-renewal by promoting mitochondrial proteome rewiring, preserving neural stem and progenitor cells self-renewal. Required for normal, constitutive degradation of PRELID1. Catalyzes the degradation of OMA1 in response to membrane depolarization. Mediates degradation of TIMM17A downstream of the integrated stress response (ISR). Catalyzes degradation of MICU1 when MICU1 is not assembled via an interchain disulfide. In Mus musculus (Mouse), this protein is ATP-dependent zinc metalloprotease YME1L1 (Yme1l1).